Reading from the N-terminus, the 83-residue chain is Small ribosomal subunit protein bS18A (83 aa).

It belongs to the bacterial ribosomal protein bS18 family. Part of the 30S ribosomal subunit. Forms a tight heterodimer with protein bS6.

Binds as a heterodimer with protein bS6 to the central domain of the 16S rRNA, where it helps stabilize the platform of the 30S subunit. The protein is Small ribosomal subunit protein bS18A of Mycolicibacterium vanbaalenii (strain DSM 7251 / JCM 13017 / BCRC 16820 / KCTC 9966 / NRRL B-24157 / PYR-1) (Mycobacterium vanbaalenii).